The primary structure comprises 361 residues: Ribosomal RNA large subunit methyltransferase M (361 aa).

S-adenosyl-L-methionine-binding positions include Ser186, 219 to 222, Asp238, Asp258, and Asp275; that span reads CPGG. Lys304 functions as the Proton acceptor in the catalytic mechanism.

The protein belongs to the class I-like SAM-binding methyltransferase superfamily. RNA methyltransferase RlmE family. RlmM subfamily. Monomer.

It is found in the cytoplasm. It carries out the reaction cytidine(2498) in 23S rRNA + S-adenosyl-L-methionine = 2'-O-methylcytidine(2498) in 23S rRNA + S-adenosyl-L-homocysteine + H(+). Its function is as follows. Catalyzes the 2'-O-methylation at nucleotide C2498 in 23S rRNA. The sequence is that of Ribosomal RNA large subunit methyltransferase M from Pseudoalteromonas translucida (strain TAC 125).